Consider the following 156-residue polypeptide: Keratin, high-sulfur matrix protein, B2B (156 aa).

A1 is modified (N-acetylalanine). 4 repeats span residues 26–35 (PTCSQTSCCQ), 36–45 (PTSIQTSCCQ), 46–55 (PISIQTSCCQ), and 56–65 (PTCLQTSGCE).

The keratin products of mammalian epidermal derivatives such as wool and hair consist of microfibrils embedded in a rigid matrix of other proteins. The matrix proteins include the high-sulfur and high-tyrosine keratins, having molecular weights of 6-20 kDa, whereas the microfibrils contain the larger, low-sulfur keratins (40-56 kDa). The chain is Keratin, high-sulfur matrix protein, B2B from Ovis aries (Sheep).